The following is a 233-amino-acid chain: Glucosamine-6-phosphate deaminase (233 aa).

Residue Asp62 is the Proton acceptor; for enolization step of the active site. Catalysis depends on Asn128, which acts as the For ring-opening step. Residue His130 is the Proton acceptor; for ring-opening step of the active site. Glu135 acts as the For ring-opening step in catalysis.

Belongs to the glucosamine/galactosamine-6-phosphate isomerase family. NagB subfamily.

It catalyses the reaction alpha-D-glucosamine 6-phosphate + H2O = beta-D-fructose 6-phosphate + NH4(+). It participates in amino-sugar metabolism; N-acetylneuraminate degradation; D-fructose 6-phosphate from N-acetylneuraminate: step 5/5. Its function is as follows. Catalyzes the reversible isomerization-deamination of glucosamine 6-phosphate (GlcN6P) to form fructose 6-phosphate (Fru6P) and ammonium ion. The protein is Glucosamine-6-phosphate deaminase of Leuconostoc citreum (strain KM20).